Reading from the N-terminus, the 165-residue chain is PARP-type zinc finger-containing protein C13F5.07c (165 aa).

Residues tyrosine 8–histidine 100 form a PARP-type; degenerate zinc finger. Residues histidine 100–glutamate 114 show a composition bias toward basic and acidic residues. The tract at residues histidine 100–aspartate 165 is disordered. The span at asparagine 117 to proline 128 shows a compositional bias: polar residues. Residues valine 131 to threonine 141 show a composition bias toward basic residues. A compositionally biased stretch (acidic residues) spans serine 149–aspartate 165.

Its subcellular location is the cytoplasm. The protein localises to the nucleus. In Schizosaccharomyces pombe (strain 972 / ATCC 24843) (Fission yeast), this protein is PARP-type zinc finger-containing protein C13F5.07c.